A 1070-amino-acid chain; its full sequence is Protocadherin-8 (1070 aa).

The signal sequence occupies residues 1–29 (MSPAKRWGSPCLFPLQLFSLCWVLSVAQS). 6 consecutive Cadherin domains span residues 30 to 135 (KTVR…APRF), 136 to 245 (PRAQ…SPAF), 247 to 354 (QGAV…APEI), 393 to 497 (QEAG…APIF), 498 to 609 (TKPV…SPIL), and 615 to 721 (ANGS…VPAS). Topologically, residues 30 to 747 (KTVRYSTFEE…SGPSLQWDTP (718 aa)) are extracellular. An N-linked (GlcNAc...) asparagine glycan is attached at N616. Over residues 716 to 725 (SAVPASSGSP) the composition is skewed to low complexity. Positions 716 to 740 (SAVPASSGSPEHSRPPGSRLAPSGP) are disordered. The helical transmembrane segment at 748–768 (LIVIIVLAGSCTLLLAAIIAI) threads the bilayer. The Cytoplasmic segment spans residues 769-1070 (ATTCNRRKKE…SPKKGINENV (302 aa)). Disordered stretches follow at residues 777 to 859 (KEVR…TGES), 906 to 928 (REAE…DSDS), and 1046 to 1070 (IGVP…NENV). 2 stretches are compositionally biased toward basic and acidic residues: residues 780–790 (RKGGALREERP) and 906–921 (REAE…KGDS). S1053 carries the phosphoserine modification.

In terms of assembly, the N-terminal extracellular domain forms homophilic interactions; these interactions activate p38 MAPK via TAOK2 and trigger endocytosis. Interacts with CDH2; this interaction may lead to CDH2 cointernalization. Interacts with CDH11. Interacts with TAOK2.

It localises to the cell membrane. It is found in the cell projection. Its subcellular location is the dendrite. The protein localises to the presynaptic cell membrane. The protein resides in the postsynaptic cell membrane. Its function is as follows. Calcium-dependent cell-adhesion protein. May play a role in activity-induced synaptic reorganization underlying long term memory. Could be involved in CDH2 internalization through TAOK2/p38 MAPK pathway. In hippocampal neurons, may play a role in the down-regulation of dendritic spines, maybe through its action on CDH2 endocytosis. This Mus musculus (Mouse) protein is Protocadherin-8 (Pcdh8).